Reading from the N-terminus, the 140-residue chain is Translation initiation factor 2 subunit beta (140 aa).

Belongs to the eIF-2-beta/eIF-5 family. Heterotrimer composed of an alpha, a beta and a gamma chain.

Functionally, eIF-2 functions in the early steps of protein synthesis by forming a ternary complex with GTP and initiator tRNA. The chain is Translation initiation factor 2 subunit beta (eif2b) from Pyrococcus abyssi (strain GE5 / Orsay).